We begin with the raw amino-acid sequence, 465 residues long: tRNA (guanine(37)-N(1))-methyltransferase (465 aa).

A mitochondrion-targeting transit peptide spans 1-20 (MDKNSQLRDMNLFRAPAARA). S-adenosyl-L-methionine-binding positions include His-238 and 304 to 305 (DG). A disordered region spans residues 326 to 345 (AVIKPPRPPRKSAAPPPEPV). Residue Asn-359 participates in S-adenosyl-L-methionine binding.

It belongs to the class I-like SAM-binding methyltransferase superfamily. TRM5/TYW2 family. Monomer.

Its subcellular location is the mitochondrion matrix. The protein localises to the nucleus. The protein resides in the cytoplasm. It carries out the reaction guanosine(37) in tRNA + S-adenosyl-L-methionine = N(1)-methylguanosine(37) in tRNA + S-adenosyl-L-homocysteine + H(+). Its function is as follows. Specifically methylates the N1 position of guanosine-37 in various cytoplasmic and mitochondrial tRNAs. Methylation is not dependent on the nature of the nucleoside 5' of the target nucleoside. This is the first step in the biosynthesis of wybutosine (yW), a modified base adjacent to the anticodon of tRNAs and required for accurate decoding. The protein is tRNA (guanine(37)-N(1))-methyltransferase of Fusarium vanettenii (strain ATCC MYA-4622 / CBS 123669 / FGSC 9596 / NRRL 45880 / 77-13-4) (Fusarium solani subsp. pisi).